The following is a 436-amino-acid chain: DNA-dependent metalloprotease SPRTN (436 aa).

A SprT-like domain is found at 19 to 186 (IRALFLEFND…RTCGGEFVKI (168 aa)). A Zn(2+)-binding site is contributed by His85. Residue Glu86 is part of the active site. Zn(2+) is bound by residues His89 and His104. A disordered region spans residues 184–219 (VKIKEPENYSQKRKRNNDPTKSELGNSSHVKINKGK). The SHP-box motif lies at 231–239 (FSGTGYKLF). The PIP-box signature appears at 271–277 (QTDSTFL). A disordered region spans residues 300 to 321 (GSPIKLPSSSNNKSHQDSSKQK). Residues 408 to 435 (KVCCPVCGTEIFESKINDHLDTCLQNYN) form a UBZ4-type zinc finger. Residues Cys411, Cys414, His426, and Cys430 each coordinate Zn(2+).

The protein belongs to the Spartan family. As to quaternary structure, homodimer. Zn(2+) is required as a cofactor. In terms of processing, autocatalytically cleaved in response to double-stranded DNA-binding: autocatalytic cleavage takes place in trans and leads to inactivation.

Its subcellular location is the nucleus. The protein resides in the chromosome. With respect to regulation, DNA-binding activates the protease activity: single-stranded DNA-binding specifically activates ability to cleave covalent DNA-protein cross-links (DPCs). In contrast, double-stranded DNA-binding specifically activates autocatalytic cleavage, and subsequent inactivation. Functionally, DNA-dependent metalloendopeptidase that mediates the proteolytic cleavage of covalent DNA-protein cross-links (DPCs) during DNA synthesis, thereby playing a key role in maintaining genomic integrity. DPCs are highly toxic DNA lesions that interfere with essential chromatin transactions, such as replication and transcription, and which are induced by reactive agents, such as UV light or formaldehyde. Associates with the DNA replication machinery and specifically removes DPCs during DNA synthesis. Catalyzes proteolytic cleavage of the hmces DNA-protein cross-link following unfolding by the brip1/fancj helicase. Acts as a pleiotropic protease for DNA-binding proteins cross-linked with DNA, such as top1, top2a, histones H3 and H4. Mediates degradation of DPCs that are not ubiquitinated, while it is not able to degrade ubiquitinated DPCs. SPRTN activation requires polymerase collision with DPCs followed by helicase bypass of DPCs. May also act as a 'reader' of ubiquitinated pcna: facilitates chromatin association of rad18 and is required for efficient pcna monoubiquitination, promoting a feed-forward loop to enhance pcna ubiquitination and translesion DNA synthesis. Acts as a regulator of translesion DNA synthesis by recruiting vcp/p97 to sites of DNA damage. This chain is DNA-dependent metalloprotease SPRTN, found in Xenopus tropicalis (Western clawed frog).